A 394-amino-acid chain; its full sequence is UDP-glucose 6-dehydrogenase (394 aa).

Residues 2–19 (KIAIAGSGYVGLSLAVLL), Val11, Asp29, Lys34, Thr83, Thr118, and Glu145 each bind NAD(+). Residues 141-145 (EFLRE), Lys203, Asn207, 248-252 (YNNPS), and Gly256 each bind substrate. Position 258 (Tyr258) interacts with NAD(+). Residue Cys259 is the Nucleophile of the active site. An NAD(+)-binding site is contributed by Lys262. Residue Lys313 coordinates substrate. Arg320 is a binding site for NAD(+).

Belongs to the UDP-glucose/GDP-mannose dehydrogenase family.

It carries out the reaction UDP-alpha-D-glucose + 2 NAD(+) + H2O = UDP-alpha-D-glucuronate + 2 NADH + 3 H(+). Its pathway is nucleotide-sugar biosynthesis; UDP-alpha-D-glucuronate biosynthesis; UDP-alpha-D-glucuronate from UDP-alpha-D-glucose: step 1/1. Its function is as follows. Catalyzes the formation of UDP-glucuronic acid which is required for capsular hyaluronic acid synthesis. Directly responsible for the transformation of some unencapsulated serotype-3 SP mutants to the encapsulated phenotype. This chain is UDP-glucose 6-dehydrogenase (cap3A), found in Streptococcus pneumoniae.